A 309-amino-acid polypeptide reads, in one-letter code: Aspartate carbamoyltransferase catalytic subunit (309 aa).

Positions 55 and 56 each coordinate carbamoyl phosphate. An L-aspartate-binding site is contributed by Lys85. Carbamoyl phosphate-binding residues include Arg106, His135, and Gln138. Arg168 and Arg230 together coordinate L-aspartate. Carbamoyl phosphate is bound by residues Leu268 and Pro269.

The protein belongs to the aspartate/ornithine carbamoyltransferase superfamily. ATCase family. In terms of assembly, heterododecamer (2C3:3R2) of six catalytic PyrB chains organized as two trimers (C3), and six regulatory PyrI chains organized as three dimers (R2).

It carries out the reaction carbamoyl phosphate + L-aspartate = N-carbamoyl-L-aspartate + phosphate + H(+). Its pathway is pyrimidine metabolism; UMP biosynthesis via de novo pathway; (S)-dihydroorotate from bicarbonate: step 2/3. Its function is as follows. Catalyzes the condensation of carbamoyl phosphate and aspartate to form carbamoyl aspartate and inorganic phosphate, the committed step in the de novo pyrimidine nucleotide biosynthesis pathway. In Vibrio campbellii (strain ATCC BAA-1116), this protein is Aspartate carbamoyltransferase catalytic subunit.